Consider the following 149-residue polypeptide: UPF0178 protein Pmen_0294 (149 aa).

It belongs to the UPF0178 family.

The sequence is that of UPF0178 protein Pmen_0294 from Ectopseudomonas mendocina (strain ymp) (Pseudomonas mendocina).